An 84-amino-acid chain; its full sequence is Small ribosomal subunit protein uS15 (84 aa).

The protein belongs to the universal ribosomal protein uS15 family. Part of the 30S ribosomal subunit. Forms a bridge to the 50S subunit in the 70S ribosome, contacting the 23S rRNA.

Its function is as follows. One of the primary rRNA binding proteins, it binds directly to 16S rRNA where it helps nucleate assembly of the platform of the 30S subunit by binding and bridging several RNA helices of the 16S rRNA. Functionally, forms an intersubunit bridge (bridge B4) with the 23S rRNA of the 50S subunit in the ribosome. In Akkermansia muciniphila (strain ATCC BAA-835 / DSM 22959 / JCM 33894 / BCRC 81048 / CCUG 64013 / CIP 107961 / Muc), this protein is Small ribosomal subunit protein uS15.